A 628-amino-acid chain; its full sequence is Putative ankyrin repeat protein L769 (628 aa).

ANK repeat units lie at residues 217–246, 333–362, 421–451, and 512–542; these read NYMDILKQACFFGSTEIINYVLNKGIEYDF, DLDEIMIEALRYNFTELIDWCINNGSDINR, TAENIIHNIIENRPHIQVLKYLLSEITNHDL, and NNLKILFVTMMSNNIDMLEFLLEINNYDQDY.

The protein is Putative ankyrin repeat protein L769 of Acanthamoeba polyphaga mimivirus (APMV).